Consider the following 120-residue polypeptide: Putative monooxygenase GME11364 (120 aa).

Residues 9 to 99 (VSVHIRLTVD…ILLKPHEVEL (91 aa)) form the ABM domain.

Belongs to the LsrG family.

Its pathway is secondary metabolite biosynthesis. In terms of biological role, putative monooxygenase; part of the gene cluster that mediates the biosynthesis of dibenzodioxocinones such as pestalotiollide B, a novel class of inhibitors against cholesterol ester transfer protein (CEPT). The biosynthesis initiates from condensation of acetate and malonate units catalyzed by the non-reducing PKS pks8/GME11356. Pks8/GME11356 lacks a thioesterase (TE) domain, which is important to the cyclizing of the third ring of atrochrysone carboxylic acid, and the esterase GME11355 might play the role of TE and catalyzes the cyclization reaction of the C ring. The lactamase-like protein GME11357 (or other beta-lactamases in Pestalotiopsis microspora) probably hydrolyzes the thioester bond between the ACP of pks8/GME11356 and the intermediate to release atrochrysone carboxylic acid, which is spontaneously dehydrates to form endocrocin anthrone. Endocrocin anthrone is further converted to emodin via the endocrocin intermediate. Emodin is then oxidized by several enzymes such as the Baeyer-Villiger oxidase GME11358, the oxidoreductase GME11367, the short chain dehydrogenase/reductase GME11373, as well as by other oxidoreductases from the cluster, to modify the A and C rings and open the B ring, and finally yield monodictyphenone. The prenyltransferase GME11375 may catalyze the addition reaction between the C5 side chains and the carbon bone of dibenzodioxocinones. The remaining biochemical reactions to the final product dibenzodioxocinones should be methylation catalyzed by methyltransferase GME11366 and reduction and lactonization reaction catalyzed by a series of oxidordeuctases. This Pestalotiopsis microspora protein is Putative monooxygenase GME11364.